The sequence spans 55 residues: Sec-independent protein translocase protein TatA (55 aa).

Residues 1–21 (MGMSFSHLLIVLLIIFVLFGA) form a helical membrane-spanning segment.

It belongs to the TatA/E family. In terms of assembly, the Tat system comprises two distinct complexes: a TatABC complex, containing multiple copies of TatA, TatB and TatC subunits, and a separate TatA complex, containing only TatA subunits. Substrates initially bind to the TatABC complex, which probably triggers association of the separate TatA complex to form the active translocon.

Its subcellular location is the cell inner membrane. Part of the twin-arginine translocation (Tat) system that transports large folded proteins containing a characteristic twin-arginine motif in their signal peptide across membranes. TatA could form the protein-conducting channel of the Tat system. The protein is Sec-independent protein translocase protein TatA of Rickettsia peacockii (strain Rustic).